The primary structure comprises 279 residues: Thiazole synthase (279 aa).

K116 serves as the catalytic Schiff-base intermediate with DXP. 1-deoxy-D-xylulose 5-phosphate-binding positions include G177, 203-204, and 225-226; these read AG and NS.

The protein belongs to the ThiG family. Homotetramer. Forms heterodimers with either ThiH or ThiS.

It localises to the cytoplasm. It carries out the reaction [ThiS sulfur-carrier protein]-C-terminal-Gly-aminoethanethioate + 2-iminoacetate + 1-deoxy-D-xylulose 5-phosphate = [ThiS sulfur-carrier protein]-C-terminal Gly-Gly + 2-[(2R,5Z)-2-carboxy-4-methylthiazol-5(2H)-ylidene]ethyl phosphate + 2 H2O + H(+). It participates in cofactor biosynthesis; thiamine diphosphate biosynthesis. Its function is as follows. Catalyzes the rearrangement of 1-deoxy-D-xylulose 5-phosphate (DXP) to produce the thiazole phosphate moiety of thiamine. Sulfur is provided by the thiocarboxylate moiety of the carrier protein ThiS. In vitro, sulfur can be provided by H(2)S. The chain is Thiazole synthase from Trichodesmium erythraeum (strain IMS101).